A 330-amino-acid chain; its full sequence is Methionyl-tRNA formyltransferase (330 aa).

117-120 is a (6S)-5,6,7,8-tetrahydrofolate binding site; that stretch reads SLLP.

Belongs to the Fmt family.

It carries out the reaction L-methionyl-tRNA(fMet) + (6R)-10-formyltetrahydrofolate = N-formyl-L-methionyl-tRNA(fMet) + (6S)-5,6,7,8-tetrahydrofolate + H(+). Attaches a formyl group to the free amino group of methionyl-tRNA(fMet). The formyl group appears to play a dual role in the initiator identity of N-formylmethionyl-tRNA by promoting its recognition by IF2 and preventing the misappropriation of this tRNA by the elongation apparatus. The protein is Methionyl-tRNA formyltransferase of Verminephrobacter eiseniae (strain EF01-2).